We begin with the raw amino-acid sequence, 1390 residues long: ABC transporter G family member 43 (1390 aa).

The segment at Met-1 to Gly-22 is disordered. One can recognise an ABC transporter 1 domain in the interval Ser-137–Gln-411. Gly-171 to Thr-178 serves as a coordination point for ATP. The region spanning Asp-489 to Phe-701 is the ABC transmembrane type-2 1 domain. 6 helical membrane-spanning segments follow: residues Phe-507–Tyr-527, Tyr-541–Leu-561, Ile-594–Tyr-614, Leu-626–Phe-646, Val-651–Val-671, and Phe-737–Phe-757. An ABC transporter 2 domain is found at Phe-798–Gly-1043. An ATP-binding site is contributed by Gly-835–Thr-842. The ABC transmembrane type-2 2 domain occupies Glu-1115 to Tyr-1329. Transmembrane regions (helical) follow at residues Tyr-1134 to Leu-1154, Met-1173 to Ala-1193, Val-1218 to Pro-1238, Phe-1253 to Val-1273, Ile-1279 to Met-1299, Trp-1307 to Ser-1327, and Leu-1362 to Ile-1382.

The protein belongs to the ABC transporter superfamily. ABCG family. PDR (TC 3.A.1.205) subfamily.

The protein localises to the membrane. May be a general defense protein. The protein is ABC transporter G family member 43 (ABCG43) of Arabidopsis thaliana (Mouse-ear cress).